The primary structure comprises 147 residues: Peptide methionine sulfoxide reductase MsrA (147 aa).

C10 is an active-site residue.

It belongs to the MsrA Met sulfoxide reductase family.

It catalyses the reaction L-methionyl-[protein] + [thioredoxin]-disulfide + H2O = L-methionyl-(S)-S-oxide-[protein] + [thioredoxin]-dithiol. The catalysed reaction is [thioredoxin]-disulfide + L-methionine + H2O = L-methionine (S)-S-oxide + [thioredoxin]-dithiol. Has an important function as a repair enzyme for proteins that have been inactivated by oxidation. Catalyzes the reversible oxidation-reduction of methionine sulfoxide in proteins to methionine. The chain is Peptide methionine sulfoxide reductase MsrA from Pelagibacter ubique (strain HTCC1062).